We begin with the raw amino-acid sequence, 360 residues long: Phenylalanine--tRNA ligase alpha subunit (360 aa).

Residue E260 coordinates Mg(2+).

It belongs to the class-II aminoacyl-tRNA synthetase family. Phe-tRNA synthetase alpha subunit type 1 subfamily. As to quaternary structure, tetramer of two alpha and two beta subunits. Mg(2+) serves as cofactor.

The protein resides in the cytoplasm. It carries out the reaction tRNA(Phe) + L-phenylalanine + ATP = L-phenylalanyl-tRNA(Phe) + AMP + diphosphate + H(+). This chain is Phenylalanine--tRNA ligase alpha subunit, found in Bradyrhizobium diazoefficiens (strain JCM 10833 / BCRC 13528 / IAM 13628 / NBRC 14792 / USDA 110).